The chain runs to 423 residues: Gamma-glutamyl phosphate reductase (423 aa).

Belongs to the gamma-glutamyl phosphate reductase family.

It localises to the cytoplasm. It catalyses the reaction L-glutamate 5-semialdehyde + phosphate + NADP(+) = L-glutamyl 5-phosphate + NADPH + H(+). The protein operates within amino-acid biosynthesis; L-proline biosynthesis; L-glutamate 5-semialdehyde from L-glutamate: step 2/2. Functionally, catalyzes the NADPH-dependent reduction of L-glutamate 5-phosphate into L-glutamate 5-semialdehyde and phosphate. The product spontaneously undergoes cyclization to form 1-pyrroline-5-carboxylate. The sequence is that of Gamma-glutamyl phosphate reductase from Burkholderia orbicola (strain MC0-3).